Consider the following 367-residue polypeptide: MTEAFPNGKTPQHVLGPPAPAAVFLVLTVRSGAEAEAKDFLGDIAGVVRSVGFRAREDHLSCVTGIGAELWDRMFDAPRPAGLHPFIEQRGDVHTAPSTPGDLLFHIRARRMDLCFELARQLVGELGDAVSVVDEVHGFRYFDERDIMGFVDGTENPEDQEAVDSVFTPTGGDDPASSTYVIVQKYTHDMAAWEALSVEDQEAAFGRHKLSDMEFPDEDKAPNSHLILNTIEDEDGTEHKIVRDNMVFGSVESGEFGTYFIGYAADVSVTEQMLENMFIGNPRGTYDRILDFSTAQTGGLFFVPSQDFLDDPDGELAAAEPSDAQNDDPASASARIEETDPPNPASADDPAPADDSLGIGSLRRRDQ.

The active-site Proton acceptor is Asp-152. His-225 is a binding site for heme. A disordered region spans residues 311–367; the sequence is DPDGELAAAEPSDAQNDDPASASARIEETDPPNPASADDPAPADDSLGIGSLRRRDQ. Low complexity predominate over residues 345–356; sequence ASADDPAPADDS. Residues 358-365 form a targeting peptide region; the sequence is GIGSLRRR.

It belongs to the DyP-type peroxidase family. As to quaternary structure, homohexamer. Heme b serves as cofactor.

The protein localises to the encapsulin nanocompartment. Cargo protein of a type 1 encapsulin nanocompartment. Has both general peroxidase activity and dye-decolorizing activity. Can catalyze the oxidation of both protoporphyrinogen IX and coproporphyrinogen III to their corresponding porphyrins. Also efficiently decolorizes the dyes alizarin red and Cibacron blue F3GA. This cargo-loaded encapsulin nanocompartment is probably involved in protection against oxidative damage. This chain is Dye-decolorizing peroxidase, found in Brevibacterium linens.